The primary structure comprises 481 residues: Uridine 5'-monophosphate synthase (481 aa).

Residues 1–214 are OPRTase; it reads MEVASQALGP…VFSAANHNGL (214 aa). Tyr-37 carries the post-translational modification Phosphotyrosine. The tract at residues 215–220 is domain linker; sequence PPPEKK. An OMPdecase region spans residues 221-481; that stretch reads ACKELSFGAR…EAYLSRLAVQ (261 aa). Residue Ser-257 participates in orotidine 5'-phosphate binding. Residues Ser-257, Asp-259, and 281–283 contribute to the UMP site; that span reads KTH. Residues Lys-281, Lys-314, Asp-317, Thr-321, Ser-372, 430–432, and 450–451 contribute to the orotidine 5'-phosphate site; these read QQY and GR. Active-site for OMPdecase activity residues include Lys-314 and Asp-317. Residues Asp-317, Thr-321, Ser-372, 430 to 432, and 450 to 451 contribute to the UMP site; these read QQY and GR.

It in the N-terminal section; belongs to the purine/pyrimidine phosphoribosyltransferase family. This sequence in the C-terminal section; belongs to the OMP decarboxylase family. As to quaternary structure, homodimer; dimerization is required for enzymatic activity.

It carries out the reaction orotidine 5'-phosphate + diphosphate = orotate + 5-phospho-alpha-D-ribose 1-diphosphate. It catalyses the reaction orotidine 5'-phosphate + H(+) = UMP + CO2. It participates in pyrimidine metabolism; UMP biosynthesis via de novo pathway; UMP from orotate: step 1/2. It functions in the pathway pyrimidine metabolism; UMP biosynthesis via de novo pathway; UMP from orotate: step 2/2. Functionally, bifunctional enzyme catalyzing the last two steps of de novo pyrimidine biosynthesis, orotate phosphoribosyltransferase (OPRT), which converts orotate to orotidine-5'-monophosphate (OMP), and orotidine-5'-monophosphate decarboxylase (ODC), the terminal enzymatic reaction that decarboxylates OMP to uridine monophosphate (UMP). This Mus musculus (Mouse) protein is Uridine 5'-monophosphate synthase (Umps).